The chain runs to 390 residues: Putative F-box protein At3g52320 (390 aa).

In terms of domain architecture, F-box spans 21–71 (VVFLPEIPEEMLIDILIRLPAKSLMRFKCVSKLWLSLITSRYFTNRFFKPS).

The protein is Putative F-box protein At3g52320 of Arabidopsis thaliana (Mouse-ear cress).